An 862-amino-acid polypeptide reads, in one-letter code: Alanine--tRNA ligase (862 aa).

Zn(2+) contacts are provided by His552, His556, Cys653, and His657.

Belongs to the class-II aminoacyl-tRNA synthetase family. Zn(2+) serves as cofactor.

It is found in the cytoplasm. It catalyses the reaction tRNA(Ala) + L-alanine + ATP = L-alanyl-tRNA(Ala) + AMP + diphosphate. Its function is as follows. Catalyzes the attachment of alanine to tRNA(Ala) in a two-step reaction: alanine is first activated by ATP to form Ala-AMP and then transferred to the acceptor end of tRNA(Ala). Also edits incorrectly charged Ser-tRNA(Ala) and Gly-tRNA(Ala) via its editing domain. This Nitrosospira multiformis (strain ATCC 25196 / NCIMB 11849 / C 71) protein is Alanine--tRNA ligase.